The sequence spans 436 residues: Adenylosuccinate synthetase (436 aa).

GTP-binding positions include 22–28 and 50–52; these read GDEGKGK and GHE. D23 serves as the catalytic Proton acceptor. Mg(2+) contacts are provided by D23 and G50. Residues 23 to 26, 48 to 51, T141, R155, N231, T246, and R310 contribute to the IMP site; these read DEGK and NAGH. The active-site Proton donor is H51. 306 to 312 provides a ligand contact to substrate; the sequence is VSTARVR. Residues R312, 338-340, and 424-426 each bind GTP; these read KMD and GVG.

This sequence belongs to the adenylosuccinate synthetase family. As to quaternary structure, homodimer. Mg(2+) is required as a cofactor.

The protein resides in the cytoplasm. It catalyses the reaction IMP + L-aspartate + GTP = N(6)-(1,2-dicarboxyethyl)-AMP + GDP + phosphate + 2 H(+). It functions in the pathway purine metabolism; AMP biosynthesis via de novo pathway; AMP from IMP: step 1/2. Plays an important role in the salvage pathway for purine nucleotide biosynthesis. Catalyzes the first committed step in the biosynthesis of AMP from IMP. This is Adenylosuccinate synthetase from Babesia bovis.